Consider the following 163-residue polypeptide: Auxin-responsive protein IAA5 (163 aa).

The EAR-like (transcriptional repression) signature appears at 15-19 (LRLGL). A PB1 domain is found at 74–160 (SSYVKVSVDG…KRLRIMKRSC (87 aa)).

This sequence belongs to the Aux/IAA family. As to quaternary structure, homodimers and heterodimers. In terms of tissue distribution, highly expressed in stems and flowers.

Its subcellular location is the nucleus. Its function is as follows. Aux/IAA proteins are short-lived transcriptional factors that function as repressors of early auxin response genes at low auxin concentrations. Repression is thought to result from the interaction with auxin response factors (ARFs), proteins that bind to the auxin-responsive promoter element (AuxRE). Formation of heterodimers with ARF proteins may alter their ability to modulate early auxin response genes expression. This chain is Auxin-responsive protein IAA5 (IAA5), found in Arabidopsis thaliana (Mouse-ear cress).